A 101-amino-acid chain; its full sequence is Small ubiquitin-related modifier 1 (101 aa).

The residue at position 2 (Ser-2) is an N-acetylserine. The residue at position 2 (Ser-2) is a Phosphoserine. Residue Lys-7 forms a Glycyl lysine isopeptide (Lys-Gly) (interchain with G-Cter in SUMO1); alternate linkage. Residue Lys-7 forms a Glycyl lysine isopeptide (Lys-Gly) (interchain with G-Cter in SUMO2); alternate linkage. The residue at position 9 (Ser-9) is a Phosphoserine. Residues Lys-16, Lys-17, and Lys-23 each participate in a glycyl lysine isopeptide (Lys-Gly) (interchain with G-Cter in SUMO2) cross-link. A (Microbial infection) Interaction with Tula hantavirus region spans residues 16 to 25; sequence KKEGEYIKLK. The region spanning 20–97 is the Ubiquitin-like domain; the sequence is EYIKLKVIGQ…IEVYQEQTGG (78 aa). Residue Lys-25 forms a Glycyl lysine isopeptide (Lys-Gly) (interchain with G-Cter in SUMO1) linkage. Position 32 is a phosphoserine (Ser-32). Glycyl lysine isopeptide (Lys-Gly) (interchain with G-Cter in SUMO2) cross-links involve residues Lys-37, Lys-39, Lys-45, and Lys-46. The tract at residues 37-40 is (Microbial infection) Interaction with Tula hantavirus; that stretch reads KVKM. Gly-97 participates in a covalent cross-link: Glycyl lysine isopeptide (Gly-Lys) (interchain with K-? in acceptor proteins). The propeptide occupies 98-101; the sequence is HSTV.

This sequence belongs to the ubiquitin family. SUMO subfamily. In terms of assembly, covalently attached to KCNB1; UBE2I increases cross-linking with KCNB1 and PIAS1 decreases cross-links with KCNB1. Interacts with SAE2, RANBP2, PIAS1 and PIAS2. Interacts with PRKN. Covalently attached to a number of proteins such as IKFZ1, PML, RANGAP1, HIPK2, SP100, p53, p73-alpha, MDM2, JUN, DNMT3B and TDG. Also interacts with HIF1A, HIPK2, HIPK3, CHD3, EXOSC9, RAD51 and RAD52. Interacts with USP25 (via ts SIM domain); the interaction weakly sumoylates USP25. Interacts with SIMC1, CASP8AP2, RNF111 and SOBP (via SIM domains). Interacts with BHLHE40/DEC1. Interacts with RWDD3. Interacts with UBE2I/UBC9 and this interaction is enhanced in the presence of RWDD3. Interacts with MTA1. Interacts with SENP2. Interacts with HINT1. As to quaternary structure, (Microbial infection) Interacts with Epstein-barr virus BGLF4. (Microbial infection) Interacts (via N-terminus) with Tula hantavirus nucleoprotein. In terms of assembly, (Microbial infection) Interacts (via N-terminus) with Hantaan hantavirus nucleoprotein. Post-translationally, cleavage of precursor form by SENP1 or SENP2 is necessary for function. Polymeric SUMO1 chains undergo polyubiquitination by RNF4.

Its subcellular location is the nucleus membrane. The protein localises to the nucleus speckle. The protein resides in the cytoplasm. It is found in the nucleus. It localises to the PML body. Its subcellular location is the cell membrane. Its function is as follows. Ubiquitin-like protein that can be covalently attached to proteins as a monomer or a lysine-linked polymer. Covalent attachment via an isopeptide bond to its substrates requires prior activation by the E1 complex SAE1-SAE2 and linkage to the E2 enzyme UBE2I, and can be promoted by E3 ligases such as PIAS1-4, RANBP2 or CBX4. This post-translational modification on lysine residues of proteins plays a crucial role in a number of cellular processes such as nuclear transport, DNA replication and repair, mitosis and signal transduction. Involved for instance in targeting RANGAP1 to the nuclear pore complex protein RANBP2. Covalently attached to the voltage-gated potassium channel KCNB1; this modulates the gating characteristics of KCNB1. Polymeric SUMO1 chains are also susceptible to polyubiquitination which functions as a signal for proteasomal degradation of modified proteins. May also regulate a network of genes involved in palate development. Covalently attached to ZFHX3. The sequence is that of Small ubiquitin-related modifier 1 (SUMO1) from Homo sapiens (Human).